We begin with the raw amino-acid sequence, 245 residues long: Acetylglutamate kinase (245 aa).

Substrate-binding positions include 41–42 (GG), Arg-63, and Asn-156.

It belongs to the acetylglutamate kinase family. ArgB subfamily.

The protein resides in the cytoplasm. The catalysed reaction is N-acetyl-L-glutamate + ATP = N-acetyl-L-glutamyl 5-phosphate + ADP. Its pathway is amino-acid biosynthesis; L-arginine biosynthesis; N(2)-acetyl-L-ornithine from L-glutamate: step 2/4. In terms of biological role, catalyzes the ATP-dependent phosphorylation of N-acetyl-L-glutamate. This is Acetylglutamate kinase from Streptococcus gordonii (strain Challis / ATCC 35105 / BCRC 15272 / CH1 / DL1 / V288).